Here is a 216-residue protein sequence, read N- to C-terminus: UPF0502 protein VPA1223 (216 aa).

Belongs to the UPF0502 family.

The polypeptide is UPF0502 protein VPA1223 (Vibrio parahaemolyticus serotype O3:K6 (strain RIMD 2210633)).